The chain runs to 449 residues: Tubulin alpha-1C chain (449 aa).

The short motif at 1-4 is the MREC motif element; that stretch reads MREC. GTP is bound at residue glutamine 11. Position 40 is an N6-acetyllysine (lysine 40). 7 residues coordinate GTP: glutamate 71, serine 140, glycine 144, threonine 145, threonine 179, asparagine 206, and asparagine 228. Glutamate 71 contacts Mg(2+). Glutamate 254 is a catalytic residue. Position 282 is a 3'-nitrotyrosine (tyrosine 282). Positions 429-449 are disordered; the sequence is EKDYEEVGADSADGEDEGEEY. Residues 431–449 are compositionally biased toward acidic residues; the sequence is DYEEVGADSADGEDEGEEY. At tyrosine 432 the chain carries Phosphotyrosine. A Phosphoserine modification is found at serine 439. The residue at position 449 (tyrosine 449) is a 3'-nitrotyrosine.

This sequence belongs to the tubulin family. As to quaternary structure, dimer of alpha and beta chains. A typical microtubule is a hollow water-filled tube with an outer diameter of 25 nm and an inner diameter of 15 nM. Alpha-beta heterodimers associate head-to-tail to form protofilaments running lengthwise along the microtubule wall with the beta-tubulin subunit facing the microtubule plus end conferring a structural polarity. Microtubules usually have 13 protofilaments but different protofilament numbers can be found in some organisms and specialized cells. Mg(2+) serves as cofactor. In terms of processing, some glutamate residues at the C-terminus are polyglutamylated, resulting in polyglutamate chains on the gamma-carboxyl group. Polyglutamylation plays a key role in microtubule severing by spastin (SPAST). SPAST preferentially recognizes and acts on microtubules decorated with short polyglutamate tails: severing activity by SPAST increases as the number of glutamates per tubulin rises from one to eight, but decreases beyond this glutamylation threshold. Glutamylation is also involved in cilia motility. Post-translationally, some glutamate residues at the C-terminus are monoglycylated but not polyglycylated due to the absence of functional TTLL10 in human. Monoglycylation is mainly limited to tubulin incorporated into cilia and flagella axonemes, which is required for their stability and maintenance. Flagella glycylation controls sperm motility. Both polyglutamylation and monoglycylation can coexist on the same protein on adjacent residues, and lowering glycylation levels increases polyglutamylation, and reciprocally. Acetylation of alpha chains at Lys-40 is located inside the microtubule lumen. This modification has been correlated with increased microtubule stability, intracellular transport and ciliary assembly. In terms of processing, methylation of alpha chains at Lys-40 is found in mitotic microtubules and is required for normal mitosis and cytokinesis contributing to genomic stability. Post-translationally, nitration of Tyr-449 is irreversible and interferes with normal dynein intracellular distribution. Undergoes a tyrosination/detyrosination cycle, the cyclic removal and re-addition of a C-terminal tyrosine residue by the enzymes tubulin tyrosine carboxypeptidase (MATCAP1/KIAA0895L, VASH1 or VASH2) and tubulin tyrosine ligase (TTL), respectively. In terms of processing, tyrosination promotes microtubule interaction with CAP-Gly domain-containing proteins such as CLIP1, CLIP2 and DCTN1. Tyrosination regulates the initiation of dynein-dynactin motility via interaction with DCTN1, which brings the dynein-dynactin complex into contact with microtubules. In neurons, tyrosinated tubulins mediate the initiation of retrograde vesicle transport. Post-translationally, detyrosination is involved in metaphase plate congression by guiding chromosomes during mitosis: detyrosination promotes interaction with CENPE, promoting pole-proximal transport of chromosomes toward the equator. Detyrosination increases microtubules-dependent mechanotransduction in dystrophic cardiac and skeletal muscle. In cardiomyocytes, detyrosinated microtubules are required to resist to contractile compression during contraction: detyrosination promotes association with desmin (DES) at force-generating sarcomeres, leading to buckled microtubules and mechanical resistance to contraction.

The protein resides in the cytoplasm. It is found in the cytoskeleton. The catalysed reaction is GTP + H2O = GDP + phosphate + H(+). Functionally, tubulin is the major constituent of microtubules, a cylinder consisting of laterally associated linear protofilaments composed of alpha- and beta-tubulin heterodimers. Microtubules grow by the addition of GTP-tubulin dimers to the microtubule end, where a stabilizing cap forms. Below the cap, tubulin dimers are in GDP-bound state, owing to GTPase activity of alpha-tubulin. The protein is Tubulin alpha-1C chain (TUBA1C) of Homo sapiens (Human).